Reading from the N-terminus, the 496-residue chain is MTIPAADDNNCPSYDKVIDLIVDYAYDYEIDSPAAWTRAKAALIDALGAAIESIHTSPECAAMIGPVWPQTATVPGGFRLPGTQFQVDALKGAFDLGGMIRYLDHNDAFPGAEWGHPSDNLGAILSTADILSREALARGSPEEVISMKQVLTALIKAYEIQGVFQIRNAFNKVGLDHVILVKVASSAMVSWLMGLSRDQARAVVSHAWADGHPLRVYRQAPNAGPRKGWAAGDACMRAVHLANLVRCGQPGIRSAITTPRWGFYDVLYRGQTFELPRPFTSWVMETVLFKVSTAEGHGLTAVEAALTIAEKLAQRGLRPEEDIVNIRARTQEAGMIIINKKGPLHNAADRDHCLRYMVAVVLLKGSQITTADYQDSSPWARDPRVETLRSITTMEEDPSFTRDYHDPQCRSVANALEVTLRDGTKLEELVPFPLGHVRRPETLQLVREKAQQNLGLKLSSERVGQILDTVDQPKFEKMAASDFVDLFIPQPASSAA.

It belongs to the PrpD family.

It functions in the pathway secondary metabolite biosynthesis. Its function is as follows. 2-methylcitrate dehydratase-like protein; part of the gene cluster that mediates the biosynthesis of oryzines, natural products with an unusual maleidride backbone. The two subunits of the fungal fatty acid synthase oryfasA and oryfasB probably form octenoic acid. This fatty acid is most likely activated by the acyl-CoA ligase oryP to give octenyl-CoA before the citrate synthase-like protein oryE catalyzes condensation with oxaloacetate to form tricarboxylic acid. The next steps of the pathways are conjectural, but a favorite possible route has been proposed, beginning with decarboxylation and concomitant dehydration by the decarboxylase oryM, followed by tautomerization, which may lead to the production of a diene intermediate. Reduction of this diene intermediate could give the known metabolite piliformic acid. On the pathway to oryzine B and oryzine A, however, hydroxylation of the diene by the alpha-ketoglutarate-dependent dioxygenase oryG and lactonisation by the lactonohydrolases oryH or oryL could give oryzine B directly. Finally, enoyl reduction by the dehydrogenase oryD would then convert oryzine B into oryzine A. The protein is 2-methylcitrate dehydratase-like protein oryR of Aspergillus oryzae (strain ATCC 42149 / RIB 40) (Yellow koji mold).